Reading from the N-terminus, the 381-residue chain is Protein YkfC (381 aa).

Positions leucine 72–leucine 337 constitute a Reverse transcriptase domain. Aspartate 166, aspartate 284, and aspartate 285 together coordinate Mg(2+).

Belongs to the bacterial reverse transcriptase family.

The polypeptide is Protein YkfC (ykfC) (Escherichia coli (strain K12)).